The chain runs to 216 residues: MOB kinase activator-like 2A (216 aa).

Zn(2+) is bound by residues Cys-81, Cys-86, His-162, and His-167.

Belongs to the MOB1/phocein family.

The protein resides in the nucleus. The polypeptide is MOB kinase activator-like 2A (Arabidopsis thaliana (Mouse-ear cress)).